Here is a 348-residue protein sequence, read N- to C-terminus: Dihydroorotase (348 aa).

Residues H13 and H15 each contribute to the Zn(2+) site. Residues 15–17 (HLR) and N41 contribute to the substrate site. 3 residues coordinate Zn(2+): K99, H136, and H174. K99 bears the N6-carboxylysine mark. H136 provides a ligand contact to substrate. Residue L219 coordinates substrate. Zn(2+) is bound at residue D247. The active site involves D247. Residues H251 and A263 each coordinate substrate.

Belongs to the metallo-dependent hydrolases superfamily. DHOase family. Class II DHOase subfamily. Homodimer. Zn(2+) serves as cofactor.

It catalyses the reaction (S)-dihydroorotate + H2O = N-carbamoyl-L-aspartate + H(+). Its pathway is pyrimidine metabolism; UMP biosynthesis via de novo pathway; (S)-dihydroorotate from bicarbonate: step 3/3. Functionally, catalyzes the reversible cyclization of carbamoyl aspartate to dihydroorotate. The protein is Dihydroorotase of Rhizobium etli (strain ATCC 51251 / DSM 11541 / JCM 21823 / NBRC 15573 / CFN 42).